Consider the following 426-residue polypeptide: Histidine--tRNA ligase (426 aa).

It belongs to the class-II aminoacyl-tRNA synthetase family. As to quaternary structure, homodimer.

It is found in the cytoplasm. It catalyses the reaction tRNA(His) + L-histidine + ATP = L-histidyl-tRNA(His) + AMP + diphosphate + H(+). The polypeptide is Histidine--tRNA ligase (Streptococcus pyogenes serotype M49 (strain NZ131)).